Here is a 131-residue protein sequence, read N- to C-terminus: Small ribosomal subunit protein uS8 (131 aa).

Belongs to the universal ribosomal protein uS8 family. As to quaternary structure, part of the 30S ribosomal subunit. Contacts proteins S5 and S12.

Its function is as follows. One of the primary rRNA binding proteins, it binds directly to 16S rRNA central domain where it helps coordinate assembly of the platform of the 30S subunit. The sequence is that of Small ribosomal subunit protein uS8 from Acidovorax sp. (strain JS42).